The chain runs to 582 residues: Semenogelin-2 (582 aa).

An N-terminal signal peptide occupies residues 1–23 (MKSIILFVLSLLLILEKQAAVMG). Disordered stretches follow at residues 26-65 (CGSKGQLPSGSSQFPRGQKGQHYSGQKDEQHTKSKGSFSI), 132-159 (GGQAHRGTQNPSQDQGNSPSGKGISSQY), 272-295 (NLNQDQEHGQKTHKISYQSSRTEE), 318-358 (TEEK…ERHL), 379-417 (EEQIHGKSQNQVRIPSQAQEHGHKENKMSYQSSSTEERR), and 439-582 (EEQI…PVST). Composition is skewed to polar residues over residues 31–40 (QLPSGSSQFP) and 137–159 (RGTQNPSQDQGNSPSGKGISSQY). Residues 325-335 (KSQNQVTIHSQ) are compositionally biased toward polar residues. Over residues 336–345 (GQEHGHKENK) the composition is skewed to basic and acidic residues. 4 stretches are compositionally biased toward polar residues: residues 379–397 (EEQIHGKSQNQVRIPSQAQ), 439–457 (EEQIHGKSQNQVRIPSQAQ), 487–496 (KDVSQSSTSF), and 506–524 (SQIQTPNPNQDQWSVQNAK). 2 stretches are compositionally biased toward basic and acidic residues: residues 525–552 (GKSDQSAGREQDLLSHEQKGRHQQESSE) and 559–582 (TEHEVAYDDHLTQQYNEDRNPVST).

This sequence belongs to the semenogelin family. Interacts with SERPINA5.

It localises to the secreted. Its function is as follows. Participates in the formation of a gel matrix (sperm coagulum) entrapping the accessory gland secretions and ejaculated spermatozoa. This chain is Semenogelin-2 (SEMG2), found in Hylobates lar (Lar gibbon).